The chain runs to 266 residues: Hydroxyethylthiazole kinase (266 aa).

Met45 contacts substrate. ATP is bound by residues Arg120 and Thr165. Ala192 contacts substrate.

It belongs to the Thz kinase family. The cofactor is Mg(2+).

The enzyme catalyses 5-(2-hydroxyethyl)-4-methylthiazole + ATP = 4-methyl-5-(2-phosphooxyethyl)-thiazole + ADP + H(+). It participates in cofactor biosynthesis; thiamine diphosphate biosynthesis; 4-methyl-5-(2-phosphoethyl)-thiazole from 5-(2-hydroxyethyl)-4-methylthiazole: step 1/1. Functionally, catalyzes the phosphorylation of the hydroxyl group of 4-methyl-5-beta-hydroxyethylthiazole (THZ). This is Hydroxyethylthiazole kinase from Psychrobacter sp. (strain PRwf-1).